Here is a 511-residue protein sequence, read N- to C-terminus: Voltage-gated potassium channel KCNC1 (511 aa).

At 1 to 190 (MGQGDESERI…EDPYSSRYAR (190 aa)) the chain is on the cytoplasmic side. Residue serine 44 is modified to Phosphoserine. Positions 77, 83, 104, and 105 each coordinate Zn(2+). The interval 121–147 (SFGGAPLDNSADDADADGPGDSGDGED) is disordered. A phosphoserine mark is found at serine 130, serine 142, serine 158, and serine 160. Residues 130–147 (SADDADADGPGDSGDGED) are compositionally biased toward acidic residues. Residues 191–209 (YVAFASLFFILVSITTFCL) form a helical membrane-spanning segment. N-linked (GlcNAc...) asparagine glycosylation is found at asparagine 220 and asparagine 229. The chain crosses the membrane as a helical span at residues 248 to 267 (IEGVCVVWFTFEFLMRVVFC). Residues 268–276 (PNKVEFIKN) lie on the Cytoplasmic side of the membrane. Residues 277–295 (SLNIIDFVAILPFYLEVGL) traverse the membrane as a helical segment. Residues 309 to 331 (FLRVVRFVRILRIFKLTRHFVGL) traverse the membrane as a helical; Voltage-sensor segment. Residues 332–344 (RVLGHTLRASTNE) lie on the Cytoplasmic side of the membrane. The helical transmembrane segment at 345 to 366 (FLLLIIFLALGVLIFATMIYYA) threads the bilayer. Residues threonine 400, leucine 401, glycine 402, and tyrosine 403 each contribute to the K(+) site. The Selectivity filter signature appears at 400 to 405 (TLGYGD). A helical membrane pass occupies residues 415–436 (LVGALCALAGVLTIAMPVPVIV). Residues 437 to 511 (NNFGMYYSLA…GRKPLRGMSI (75 aa)) are Cytoplasmic-facing. Serine 474 is modified (phosphoserine). Threonine 483 is modified (phosphothreonine).

The protein belongs to the potassium channel family. C (Shaw) (TC 1.A.1.2) subfamily. Kv3.1/KCNC1 sub-subfamily. Homotetramer. Homomultimer. Heteromultimer with KCNG3, KCNG4 and KCNV2. Heteromultimer with KCNC2. Heterotetramer with KCNC3. Interacts with the ancillary subunits KCNE1 and KCNE2; the interaction modulates channel activity. In terms of processing, N-glycosylated; contains sialylated glycans. In terms of tissue distribution, detected in cerebellum. Detected in brain (at protein level). Detected in brain.

The protein resides in the cell membrane. The protein localises to the cell projection. It localises to the axon. Its subcellular location is the presynaptic cell membrane. It catalyses the reaction K(+)(in) = K(+)(out). Functionally, voltage-gated potassium channel that opens in response to the voltage difference across the membrane and through which potassium ions pass in accordance with their electrochemical gradient. The mechanism is time-dependent and inactivation is slow. Plays an important role in the rapid repolarization of fast-firing brain neurons. Can form functional homotetrameric channels and heterotetrameric channels that contain variable proportions of KCNC2, and possibly other family members as well. Contributes to fire sustained trains of very brief action potentials at high frequency in pallidal neurons. The chain is Voltage-gated potassium channel KCNC1 from Mus musculus (Mouse).